The chain runs to 280 residues: MKLAFDDFLNSMSETNTTLDYFTDFDKVKKNVAQIEIHLNQLNYLLGKDDLKQAVYDLYAECPNAFSILEILIAVRKKEQKKSLDEKGQVVTLNSYFQSADKIIDFLNNTGLADVFRDKNIKNLVDYVFGIEVGLDTNARKNRGGDNMSKAVQLLFDNADIYYKKEVRNTIFTDIESLGADVKQFDFVIKTKRKTYVIETNYYNSGGSKLNEVARAYTDVAPKINQYSQYEFVWITDGQGWKTAKNKLQEAYTHIPSVYNLYTLHGFIEQLNSEGVIKDW.

The protein belongs to the DpnII type II restriction endonuclease family.

The enzyme catalyses Endonucleolytic cleavage of DNA to give specific double-stranded fragments with terminal 5'-phosphates.. Its function is as follows. A P subtype restriction enzyme that recognizes the double-stranded unmethylated sequence 5'-GATC-3' and cleaves before G-1. The polypeptide is Type II restriction enzyme MboI (mboIR) (Moraxella bovis).